The following is a 62-amino-acid chain: Large ribosomal subunit protein uL30 (62 aa).

The protein belongs to the universal ribosomal protein uL30 family. In terms of assembly, part of the 50S ribosomal subunit.

In Prosthecochloris aestuarii (strain DSM 271 / SK 413), this protein is Large ribosomal subunit protein uL30.